The chain runs to 337 residues: Dolichyl-phosphate beta-glucosyltransferase ALG5C (337 aa).

The Lumenal segment spans residues Met-1–Pro-6. The chain crosses the membrane as a helical span at residues Ile-7 to Leu-27. The Cytoplasmic portion of the chain corresponds to Cys-28–Val-337.

This sequence belongs to the glycosyltransferase 2 family.

The protein resides in the endoplasmic reticulum membrane. It catalyses the reaction a di-trans,poly-cis-dolichyl phosphate + UDP-alpha-D-glucose = a di-trans,poly-cis-dolichyl beta-D-glucosyl phosphate + UDP. Its pathway is protein modification; protein glycosylation. In terms of biological role, dolichyl-phosphate beta-glucosyltransferase involved in the glycosylation of glycoproteins through the synthesis of dolichyl beta-D-glucosyl phosphate which serves as a sugar donor for transfer of three glucose residues to the Man-9-GlcNAc-2-PP-dolichol precursor to N-glycans. This Trichomonas vaginalis (strain ATCC PRA-98 / G3) protein is Dolichyl-phosphate beta-glucosyltransferase ALG5C.